Here is a 180-residue protein sequence, read N- to C-terminus: Large ribosomal subunit protein uL18m (180 aa).

It belongs to the universal ribosomal protein uL18 family. As to quaternary structure, component of the mitochondrial ribosome large subunit (39S) which comprises a 16S rRNA and about 50 distinct proteins.

The protein resides in the mitochondrion. Together with thiosulfate sulfurtransferase (TST), acts as a mitochondrial import factor for the cytosolic 5S rRNA. The precursor form shows RNA chaperone activity; is able to fold the 5S rRNA into an import-competent conformation that is recognized by rhodanese (TST). Both the cytoplasmic and mitochondrial forms are able to bind to the helix IV-loop D in the gamma domain of the 5S rRNA. This is Large ribosomal subunit protein uL18m (Mrpl18) from Mus musculus (Mouse).